Reading from the N-terminus, the 1052-residue chain is Multidrug resistance protein MdtB (1052 aa).

Transmembrane regions (helical) follow at residues 15-37 (LFIL…GIIG), 345-362 (FELL…YLFL), 367-389 (ATII…MYFL), 396-418 (LTLM…VIEN), 438-460 (GEIG…PLLF), 472-494 (FAVT…TPMM), 535-557 (HPWL…YLLI), 867-889 (LWLI…ESFI), 909-931 (LMLT…IGIV), 968-990 (ILMT…GVGA), and 1000-1022 (MVGG…YLLF). Positions 1032-1052 (KNRHRDEDIDSSELLNGQEPQ) are disordered.

It belongs to the resistance-nodulation-cell division (RND) (TC 2.A.6) family. MdtB subfamily. In terms of assembly, part of a tripartite efflux system composed of MdtA, MdtB and MdtC. MdtB forms a heteromultimer with MdtC.

The protein localises to the cell inner membrane. The sequence is that of Multidrug resistance protein MdtB from Yersinia pseudotuberculosis serotype I (strain IP32953).